Here is a 91-residue protein sequence, read N- to C-terminus: Probable Fe(2+)-trafficking protein (91 aa).

Belongs to the Fe(2+)-trafficking protein family.

In terms of biological role, could be a mediator in iron transactions between iron acquisition and iron-requiring processes, such as synthesis and/or repair of Fe-S clusters in biosynthetic enzymes. This chain is Probable Fe(2+)-trafficking protein, found in Paraburkholderia phytofirmans (strain DSM 17436 / LMG 22146 / PsJN) (Burkholderia phytofirmans).